An 87-amino-acid chain; its full sequence is Conotoxin QcMNCL-XIII0.1 (87 aa).

The N-terminal stretch at 1 to 18 (MNCLQLLLVLLLISTIAA) is a signal peptide. Residues 19 to 34 (LHGDGRVPQRRGRNIR) constitute a propeptide that is removed on maturation.

Contains 4 disulfide bonds. In terms of tissue distribution, expressed by the venom duct.

It localises to the secreted. In terms of biological role, may interact and inhibit Cav3.1/CACNA1G calcium channels. In a ex vivo model, shows ability to block nerve signal transduction. The sequence is that of Conotoxin QcMNCL-XIII0.1 from Conus quercinus (Oak cone).